Here is a 124-residue protein sequence, read N- to C-terminus: U33-theraphotoxin-Cg1c (124 aa).

The first 17 residues, 1-17 (MKFAVAIAFTLLVCVFA), serve as a signal peptide directing secretion. Disulfide bonds link cysteine 26–cysteine 37, cysteine 31–cysteine 51, cysteine 36–cysteine 75, cysteine 61–cysteine 83, and cysteine 77–cysteine 94. A compositionally biased stretch (basic and acidic residues) spans 93–108 (RCQEESGKSDKSKESQ). The segment at 93–124 (RCQEESGKSDKSKESQGSDESEESEESKESSG) is disordered. Positions 109-118 (GSDESEESEE) are enriched in acidic residues.

The protein belongs to the neurotoxin 32 family. As to expression, expressed by the venom gland.

It is found in the secreted. In Chilobrachys guangxiensis (Chinese earth tiger tarantula), this protein is U33-theraphotoxin-Cg1c.